Reading from the N-terminus, the 586-residue chain is MSVHQIRKHAVLPPIICRSDKEFLESVQRYIITETERLGCSEEGPADEYYIIYRNVFDKVIEHITAYKSILTSIKKEYDAFIETIKKDRRTTFCLHGKLKGLAAEPTALVYYRKRTIQLEAKMRIIESNSSKIQSQIDHIKQCRAEYDTKEVKYCTFSKDPSKPIPGMTLQESMNLDALTKYMKHLEDKYAEIKQAMLIKYVPAQRKADLDEEMIVLLKRRDVAENLNKKLQFCHQRLQIISQALSSWVKSDMSSPFQDFVEQIQKTKYLQGDQGIVEELMEDDPRRAKEAEIMLHYIERFNELISLGEYEKAACYAANSPRRILRNIGTMNTFKAVGKIRGKPLPLLLFFEALFITSHAFPCPVDAALTLEGIKCGLSEKRLDLVTNWVTQERLTFSEEAGDVICDYGEQDTYNKAKCLALAQIVYSECGLHKKAILCLCKQGQTHRVMEYIQQLKDFTTDDLLQLLMSCPQVELIQCLTKELNEKQPSLSFGLAILHLFSADMKKVGIKLLQEINKGGIDAVESLMINDSFCSIEKWQEVANICSQNGFDKLSNDITSILRSQAAVTEISEEDDAVNLMEHVFW.

Residues 174–232 are a coiled coil; it reads MNLDALTKYMKHLEDKYAEIKQAMLIKYVPAQRKADLDEEMIVLLKRRDVAENLNKKLQ.

The chain is Clathrin heavy chain linker domain-containing protein 1 (CLHC1) from Homo sapiens (Human).